The following is a 2635-amino-acid chain: Protein unc-79 homolog (2635 aa).

Phosphoserine occurs at positions 754 and 758. Disordered regions lie at residues Gly907–Glu929, Ile1538–Arg1575, Leu1607–Ser1678, Ser1693–Gln1832, Leu1863–Arg1909, and Leu1929–Gly1950. Over residues Ser1666 to Ser1678 the composition is skewed to low complexity. The span at Lys1699–Ala1713 shows a compositional bias: polar residues. A compositionally biased stretch (basic and acidic residues) spans Leu1761–Gly1775. 2 stretches are compositionally biased toward polar residues: residues Glu1897 to Arg1909 and Leu1929 to Ile1947. Helical transmembrane passes span Leu2223–Gly2243 and Val2466–Cys2486.

The protein belongs to the unc-79 family. In terms of assembly, NALCN complex consists of NALCN and auxiliary subunits, UNC79, UNC80 and NACL1. These auxiliary subunits are essential for the NALCN channel function. UNC80 bridges NALCN to UNC79.

Its subcellular location is the cell membrane. Its function is as follows. Auxiliary subunit of the NALCN sodium channel complex, a voltage-gated ion channel responsible for the resting Na(+) permeability that controls neuronal excitability. Activated by neuropeptides substance P, neurotensin, and extracellular calcium that regulates neuronal excitability by controlling the sizes of NALCN-dependent sodium-leak current. This chain is Protein unc-79 homolog (UNC79), found in Homo sapiens (Human).